The sequence spans 94 residues: Long neurotoxin-like OH-31 (94 aa).

Residues 1-19 (MKTLLLTLVVVTILCLDLG) form the signal peptide. Disulfide bonds link Cys35–Cys55, Cys37–Cys66, Cys70–Cys81, and Cys82–Cys87.

Belongs to the three-finger toxin family. Long-chain subfamily. Type II alpha-neurotoxin sub-subfamily. As to expression, expressed by the venom gland.

Its subcellular location is the secreted. Its function is as follows. Binds with high affinity to muscular nicotinic acetylcholine receptors (nAChRs), whereas it binds with a low affinity to neuronal alpha-7/CHRNA7 nAChRs. This is Long neurotoxin-like OH-31 from Ophiophagus hannah (King cobra).